Consider the following 229-residue polypeptide: MIIKNPIIKGKFIERLNRFEAYVEIDGIKTLVHVPNTGRLKEILVKGADVLLEVREKKGRKTPYELAFAYKGKRLISIDSQVPNKVFLESIKKGIVEEFRGYELVEKEKSFGNSKFDIKLTNGKEICYIEVKGVTLEVDGVAKFPDAPTERGRKHLKELIKVKEEGMRAAVVFLIQMDDIKYFTPNDEQDPQFGQFLREAFTKGVEVYAYTCDVGENFINLKNRVQVVL.

This sequence belongs to the SfsA family.

The chain is Sugar fermentation stimulation protein homolog from Caldanaerobacter subterraneus subsp. tengcongensis (strain DSM 15242 / JCM 11007 / NBRC 100824 / MB4) (Thermoanaerobacter tengcongensis).